Here is a 585-residue protein sequence, read N- to C-terminus: Cyclic nucleotide-binding domain-containing protein 2 (585 aa).

An a nucleoside 3',5'-cyclic phosphate-binding site is contributed by 116-239 (SYRNYAEPLQ…DAQYRFEFFR (124 aa)).

The protein localises to the cytoplasm. Its subcellular location is the cytosol. Essential for male fertility. Plays an important role in spermatogenesis and regulates sperm motility by controlling the development of the flagellar bending of sperm. This Macaca fascicularis (Crab-eating macaque) protein is Cyclic nucleotide-binding domain-containing protein 2 (CNBD2).